The sequence spans 955 residues: Glycine dehydrogenase (decarboxylating) (955 aa).

The residue at position 705 (Lys-705) is an N6-(pyridoxal phosphate)lysine.

The protein belongs to the GcvP family. In terms of assembly, the glycine cleavage system is composed of four proteins: P, T, L and H. Pyridoxal 5'-phosphate is required as a cofactor.

It catalyses the reaction N(6)-[(R)-lipoyl]-L-lysyl-[glycine-cleavage complex H protein] + glycine + H(+) = N(6)-[(R)-S(8)-aminomethyldihydrolipoyl]-L-lysyl-[glycine-cleavage complex H protein] + CO2. The glycine cleavage system catalyzes the degradation of glycine. The P protein binds the alpha-amino group of glycine through its pyridoxal phosphate cofactor; CO(2) is released and the remaining methylamine moiety is then transferred to the lipoamide cofactor of the H protein. This is Glycine dehydrogenase (decarboxylating) from Aliivibrio fischeri (strain ATCC 700601 / ES114) (Vibrio fischeri).